Reading from the N-terminus, the 378-residue chain is Transcription factor YY2 (378 aa).

The interval 39-113 (LETSVGQTIE…DNLLFSPEFG (75 aa)) is mediates transcriptional activation. Residues 243 to 378 (EFTSMRPKKP…LTHVKNKNDQ (136 aa)) are mediates transcriptional repression. C2H2-type zinc fingers lie at residues 260 to 284 (IACS…LHIH), 289 to 311 (HVCA…QLVH), 317 to 341 (YQCT…VRIH), and 347 to 371 (FVCP…ILTH).

Belongs to the YY transcription factor family. As to expression, weakly expressed by neuronal and glial cells in the cerebral cortex. Expressed by Purkinje cells and in the granular layers of the cerebellum. Expressed in all layers of spermatocytes in testis but not detected in sperm cells.

It localises to the nucleus. Functions as a multifunctional transcription factor that may exhibit positive and negative control on a large number of genes. May antagonize YY1 and function in development and differentiation. This Mus musculus (Mouse) protein is Transcription factor YY2 (Yy2).